Reading from the N-terminus, the 343-residue chain is Probable dual-specificity RNA methyltransferase RlmN (343 aa).

The active-site Proton acceptor is the glutamate 91. One can recognise a Radical SAM core domain in the interval 97–326; that stretch reads HPGRITACIS…AEIRQEKGSD (230 aa). An intrachain disulfide couples cysteine 104 to cysteine 331. [4Fe-4S] cluster is bound by residues cysteine 111, cysteine 115, and cysteine 118. Residues 158–159, serine 190, 213–215, and asparagine 289 contribute to the S-adenosyl-L-methionine site; these read GE and SLH. The active-site S-methylcysteine intermediate is the cysteine 331.

It belongs to the radical SAM superfamily. RlmN family. The cofactor is [4Fe-4S] cluster.

The protein resides in the cytoplasm. The catalysed reaction is adenosine(2503) in 23S rRNA + 2 reduced [2Fe-2S]-[ferredoxin] + 2 S-adenosyl-L-methionine = 2-methyladenosine(2503) in 23S rRNA + 5'-deoxyadenosine + L-methionine + 2 oxidized [2Fe-2S]-[ferredoxin] + S-adenosyl-L-homocysteine. It carries out the reaction adenosine(37) in tRNA + 2 reduced [2Fe-2S]-[ferredoxin] + 2 S-adenosyl-L-methionine = 2-methyladenosine(37) in tRNA + 5'-deoxyadenosine + L-methionine + 2 oxidized [2Fe-2S]-[ferredoxin] + S-adenosyl-L-homocysteine. Its function is as follows. Specifically methylates position 2 of adenine 2503 in 23S rRNA and position 2 of adenine 37 in tRNAs. The protein is Probable dual-specificity RNA methyltransferase RlmN of Thermotoga neapolitana (strain ATCC 49049 / DSM 4359 / NBRC 107923 / NS-E).